Here is a 125-residue protein sequence, read N- to C-terminus: Small ribosomal subunit protein uS13 (125 aa).

It belongs to the universal ribosomal protein uS13 family. As to quaternary structure, part of the 30S ribosomal subunit. Forms a loose heterodimer with protein S19. Forms two bridges to the 50S subunit in the 70S ribosome.

Located at the top of the head of the 30S subunit, it contacts several helices of the 16S rRNA. In the 70S ribosome it contacts the 23S rRNA (bridge B1a) and protein L5 of the 50S subunit (bridge B1b), connecting the 2 subunits; these bridges are implicated in subunit movement. Contacts the tRNAs in the A and P-sites. The chain is Small ribosomal subunit protein uS13 from Rickettsia felis (strain ATCC VR-1525 / URRWXCal2) (Rickettsia azadi).